We begin with the raw amino-acid sequence, 308 residues long: Probable manganese-dependent inorganic pyrophosphatase (308 aa).

6 residues coordinate Mn(2+): His9, Asp13, Asp15, Asp75, His97, and Asp149.

The protein belongs to the PPase class C family. The cofactor is Mn(2+).

It localises to the cytoplasm. The enzyme catalyses diphosphate + H2O = 2 phosphate + H(+). In Listeria welshimeri serovar 6b (strain ATCC 35897 / DSM 20650 / CCUG 15529 / CIP 8149 / NCTC 11857 / SLCC 5334 / V8), this protein is Probable manganese-dependent inorganic pyrophosphatase.